The primary structure comprises 504 residues: Glycine--tRNA ligase (504 aa).

The substrate site is built by R99 and E189. ATP is bound by residues 221 to 223, 231 to 236, 306 to 307, and 365 to 368; these read RNE, FRVREL, EI, and GVDR. Residue 236–240 coordinates substrate; sequence LEQME. Substrate is bound at residue 361–365; the sequence is EPSAG.

Belongs to the class-II aminoacyl-tRNA synthetase family. In terms of assembly, homodimer.

It localises to the cytoplasm. It catalyses the reaction tRNA(Gly) + glycine + ATP = glycyl-tRNA(Gly) + AMP + diphosphate. In terms of biological role, catalyzes the attachment of glycine to tRNA(Gly). This chain is Glycine--tRNA ligase, found in Deinococcus geothermalis (strain DSM 11300 / CIP 105573 / AG-3a).